Consider the following 29-residue polypeptide: Brevinin-2Ee (29 aa).

Cysteine 23 and cysteine 29 are joined by a disulfide.

The protein belongs to the frog skin active peptide (FSAP) family. Brevinin subfamily. As to expression, expressed by the skin glands.

The protein resides in the secreted. In terms of biological role, shows antibacterial activity against representative Gram-negative and Gram-positive bacterial species, and hemolytic activity. This Pelophylax lessonae (Pool frog) protein is Brevinin-2Ee.